The chain runs to 432 residues: MNFDVAIIGGGLAGLTCAIALQQRGKRCVIINNGQAAIDFASGSLDLLSRMPSTTYGENRAVENLKENITALRNELPAHPYSLLGAEKVLAKAQDFERLANELHLDLIGSTEKNHWRVTGLGSLRGAWLSPNSVPTVQGNEPFPHKRIAVLGIEGYHDFQPQLLAANLVLNPQFEHCEVTSGFLNIPQLDELRKNAREFRSVNISQLLEHKLAFKDLVKEIIESAQGAEAVFLPACFGLENQEFMTALRDATKLALFELPTLPPSLLGMRQRIQLRHKFESLGGLMINGDSALNATFEGNQVRCINTRLLEDEEITADNFVLASGSFFSKGLISEFDKIYEPVFESDIIGVEGFNNKDRFTWTAHRFAHPQPYQSAGVAINAQCQVKKCGQFLTNLYAVGNVIGGFNALELGCGSGVAVVTALAVADEILAK.

This sequence belongs to the anaerobic G-3-P dehydrogenase subunit B family. In terms of assembly, composed of a catalytic GlpA/B dimer and of membrane bound GlpC. Requires FMN as cofactor.

The enzyme catalyses a quinone + sn-glycerol 3-phosphate = dihydroxyacetone phosphate + a quinol. It functions in the pathway polyol metabolism; glycerol degradation via glycerol kinase pathway; glycerone phosphate from sn-glycerol 3-phosphate (anaerobic route): step 1/1. Functionally, conversion of glycerol 3-phosphate to dihydroxyacetone. Uses fumarate or nitrate as electron acceptor. The protein is Anaerobic glycerol-3-phosphate dehydrogenase subunit B (glpB) of Haemophilus influenzae (strain ATCC 51907 / DSM 11121 / KW20 / Rd).